A 433-amino-acid chain; its full sequence is MDTSTQQRIISLIKKEVVPATGCTEPVAVALAAAQAASLMEQRPDHVEVLLSPNILKNAMGVGIPGTGMIGLPIAIALGIVVADPTKQLKVLDGIAPEQLEEAKKIVDGKIIQVAVKQGDIDKLYIEINMSAGSESASTIIEKIHTNIIYAAHNGQVVIDGRHDAADKSESASSESEEEIALSFEMVYDFAMNTPTEEIEFILEAARLNRHASEVSMKGNYGHAVGRMIQGSLGRRYLGDSSLTRMLTYTSSACDARMDGAPVTVMSNSGSGNQGITATLPVLSFAEDEQADHERTVRALVLSNLMVIYIKQKLGRLSALCGCVVAATGSSCGLCYLMGGTKEQIGFAIKNMIGNITGMLCDGAKPSCSMKVSSGVSSAMFSALLAMEKKVVTSNEGIVDDDVDQSIDNLTSIGRDGMNATDTLVLNIMTSKK.

It belongs to the UPF0597 family.

This is UPF0597 protein PG_0909 from Porphyromonas gingivalis (strain ATCC BAA-308 / W83).